The primary structure comprises 200 residues: Probable nicotinate-nucleotide adenylyltransferase (200 aa).

The protein belongs to the NadD family.

The enzyme catalyses nicotinate beta-D-ribonucleotide + ATP + H(+) = deamido-NAD(+) + diphosphate. It participates in cofactor biosynthesis; NAD(+) biosynthesis; deamido-NAD(+) from nicotinate D-ribonucleotide: step 1/1. Functionally, catalyzes the reversible adenylation of nicotinate mononucleotide (NaMN) to nicotinic acid adenine dinucleotide (NaAD). The chain is Probable nicotinate-nucleotide adenylyltransferase from Clostridium botulinum (strain Alaska E43 / Type E3).